A 446-amino-acid polypeptide reads, in one-letter code: Putative ankyrin repeat protein L273 (446 aa).

6 ANK repeats span residues 71-100 (NGEF…KSNM), 124-153 (DHNK…RMRP), 206-237 (TDIE…KILM), 245-277 (VWVS…KMHV), 303-332 (ELEY…NSYY), and 365-394 (YTDI…QQII).

The protein is Putative ankyrin repeat protein L273 of Acanthamoeba polyphaga (Amoeba).